Reading from the N-terminus, the 276-residue chain is O-methyltransferase cnsE (276 aa).

Residues Gln-110, 133-134 (DA), and His-155 contribute to the S-adenosyl-L-methionine site.

It belongs to the methyltransferase superfamily. It depends on S-adenosyl-L-methionine as a cofactor.

The protein operates within alkaloid biosynthesis. O-methyltransferase; part of the gene cluster that mediates the biosynthesis of communesins, a prominent class of indole alkaloids with great potential as pharmaceuticals. Communesins are biosynthesized by the coupling of tryptamine and aurantioclavine, two building blocks derived from L-tryptophan. The L-tryptophan decarboxylase cnsB converts L-tryptophan to tryptamine, whereas the tryptophan dimethylallyltransferase cnsF converts L-tryptophan to 4-dimethylallyl tryptophan which is further transformed to aurantioclavine by the aurantioclavine synthase cnsA, probably aided by the catalase cnsD. The cytochrome P450 monooxygenase cnsC catalyzes the heterodimeric coupling between the two different indole moieties, tryptamine and aurantioclavine, to construct vicinal quaternary stereocenters and yield the heptacyclic communesin scaffold. The O-methyltransferase cnsE then methylates the communesin scaffold to produce communesin K, the simplest characterized communesin that contains the heptacyclic core. The dioxygenase cnsJ converts communesin K into communesin I. Acylation to introduce the hexadienyl group at position N16 of communesin I by the acyltransferase cnsK leads to the production of communesin B. The hexadienyl group is produced by the highly reducing polyketide synthase cnsI, before being hydrolytically removed from cnsI by the serine hydrolase cnsH, converted into hexadienyl-CoA by the CoA ligase cnsG, and then transferred to communesin I by cnsK. Surprisingly, cnsK may also be a promiscuous acyltransferase that can tolerate a range of acyl groups, including acetyl-, propionyl-, and butyryl-CoA, which lead to communesins A, G and H respectively. The roles of the alpha-ketoglutarate-dependent dioxygenases cnsM and cnsP have still to be determined. The chain is O-methyltransferase cnsE from Penicillium expansum (Blue mold rot fungus).